Here is a 543-residue protein sequence, read N- to C-terminus: Cytochrome P450 1B1 (543 aa).

Cysteine 470 is a heme binding site.

The protein belongs to the cytochrome P450 family. Requires heme as cofactor.

It is found in the endoplasmic reticulum membrane. The protein localises to the microsome membrane. The protein resides in the mitochondrion. The enzyme catalyses an organic molecule + reduced [NADPH--hemoprotein reductase] + O2 = an alcohol + oxidized [NADPH--hemoprotein reductase] + H2O + H(+). It catalyses the reaction 17beta-estradiol + reduced [NADPH--hemoprotein reductase] + O2 = 2-hydroxy-17beta-estradiol + oxidized [NADPH--hemoprotein reductase] + H2O + H(+). It carries out the reaction 17beta-estradiol + reduced [NADPH--hemoprotein reductase] + O2 = 4-hydroxy-17beta-estradiol + oxidized [NADPH--hemoprotein reductase] + H2O + H(+). The catalysed reaction is estrone + reduced [NADPH--hemoprotein reductase] + O2 = 2-hydroxyestrone + oxidized [NADPH--hemoprotein reductase] + H2O + H(+). The enzyme catalyses estrone + reduced [NADPH--hemoprotein reductase] + O2 = 4-hydroxyestrone + oxidized [NADPH--hemoprotein reductase] + H2O + H(+). It catalyses the reaction testosterone + reduced [NADPH--hemoprotein reductase] + O2 = 6beta,17beta-dihydroxyandrost-4-en-3-one + oxidized [NADPH--hemoprotein reductase] + H2O + H(+). It carries out the reaction progesterone + reduced [NADPH--hemoprotein reductase] + O2 = 6beta-hydroxyprogesterone + oxidized [NADPH--hemoprotein reductase] + H2O + H(+). The catalysed reaction is progesterone + reduced [NADPH--hemoprotein reductase] + O2 = 16alpha-hydroxyprogesterone + oxidized [NADPH--hemoprotein reductase] + H2O + H(+). The enzyme catalyses all-trans-retinol + reduced [NADPH--hemoprotein reductase] + O2 = all-trans-retinal + oxidized [NADPH--hemoprotein reductase] + 2 H2O + H(+). It catalyses the reaction all-trans-retinal + reduced [NADPH--hemoprotein reductase] + O2 = all-trans-retinoate + oxidized [NADPH--hemoprotein reductase] + H2O + 2 H(+). It carries out the reaction (5Z,8Z,11Z,14Z)-eicosatetraenoate + reduced [NADPH--hemoprotein reductase] + O2 = (8R,9S)-epoxy-(5Z,11Z,14Z)-eicosatrienoate + oxidized [NADPH--hemoprotein reductase] + H2O + H(+). The catalysed reaction is (5Z,8Z,11Z,14Z)-eicosatetraenoate + reduced [NADPH--hemoprotein reductase] + O2 = (11R,12S)-epoxy-(5Z,8Z,14Z)-eicosatrienoate + oxidized [NADPH--hemoprotein reductase] + H2O + H(+). The enzyme catalyses (5Z,8Z,11Z,14Z)-eicosatetraenoate + reduced [NADPH--hemoprotein reductase] + O2 = (11S,12R)-epoxy-(5Z,8Z,14Z)-eicosatrienoate + oxidized [NADPH--hemoprotein reductase] + H2O + H(+). It catalyses the reaction (5Z,8Z,11Z,14Z)-eicosatetraenoate + reduced [NADPH--hemoprotein reductase] + O2 = (14S,15R)-epoxy-(5Z,8Z,11Z)-eicosatrienoate + oxidized [NADPH--hemoprotein reductase] + H2O + H(+). It carries out the reaction (5Z,8Z,11Z,14Z)-eicosatetraenoate + reduced [NADPH--hemoprotein reductase] + O2 = (14R,15S)-epoxy-(5Z,8Z,11Z)-eicosatrienoate + oxidized [NADPH--hemoprotein reductase] + H2O + H(+). The catalysed reaction is (5S)-hydroperoxy-(6E,8Z,11Z,14Z)-eicosatetraenoate = 5-oxo-(6E,8Z,11Z,14Z)-eicosatetraenoate + H2O. The enzyme catalyses (12S)-hydroperoxy-(5Z,8Z,10E,14Z)-eicosatetraenoate = 12-oxo-(5Z,8Z,10E,14Z)-eicosatetraenoate + H2O. It catalyses the reaction (15S)-hydroperoxy-(5Z,8Z,11Z,13E)-eicosatetraenoate = 15-oxo-(5Z,8Z,11Z,13E)-eicosatetraenoate + H2O. It carries out the reaction (13S)-hydroperoxy-(9Z,11E)-octadecadienoate = 13-oxo-(9Z,11E)-octadecadienoate + H2O. It functions in the pathway steroid hormone biosynthesis. Its pathway is cofactor metabolism; retinol metabolism. The protein operates within lipid metabolism; arachidonate metabolism. Its activity is regulated as follows. Enzyme activity is increased by cytochrome b5. Enzyme activity is increased by liposomes containing anionic phospholipids, phosphatidic acid and cardiolipin. Inhibited by naringenin with an IC(50) of 5 uM. A cytochrome P450 monooxygenase involved in the metabolism of various endogenous substrates, including fatty acids, steroid hormones and vitamins. Mechanistically, uses molecular oxygen inserting one oxygen atom into a substrate, and reducing the second into a water molecule, with two electrons provided by NADPH via cytochrome P450 reductase (NADPH--hemoprotein reductase). Exhibits catalytic activity for the formation of hydroxyestrogens from 17beta-estradiol (E2), namely 2- and 4-hydroxy E2. Metabolizes testosterone and progesterone to B or D ring hydroxylated metabolites. May act as a major enzyme for all-trans retinoic acid biosynthesis in extrahepatic tissues. Catalyzes two successive oxidative transformation of all-trans retinol to all-trans retinal and then to the active form all-trans retinoic acid. Catalyzes the epoxidation of double bonds of certain PUFA. Converts arachidonic acid toward epoxyeicosatrienoic acid (EpETrE) regioisomers, 8,9-, 11,12-, and 14,15- EpETrE, that function as lipid mediators in the vascular system. Additionally, displays dehydratase activity toward oxygenated eicosanoids including hydroperoxyeicosatetraenoates (HpETEs). This activity is independent of cytochrome P450 reductase, NADPH, and O2. Also involved in the oxidative metabolism of xenobiotics, particularly converting polycyclic aromatic hydrocarbons and heterocyclic aryl amines procarcinogens to DNA-damaging products. Plays an important role in retinal vascular development. Under ambient/hyperoxic O2 conditions, promotes angiogenesis and capillary morphogenesis of retinal endothelial cells and pericytes, likely by metabolizing the oxygenated products symptomatic of oxidative stress. Also, contributes to oxidative homeostasis and ultrastructural organization and function of trabecular meshwork tissue through modulation of POSTN expression. In Rattus norvegicus (Rat), this protein is Cytochrome P450 1B1.